A 518-amino-acid polypeptide reads, in one-letter code: MARIALISVSNKDGLIPFAKTLTTLHGFEIISSGGTARALKEANIPVKTVSDYTGAPEILGGRVKTLHPRIHGGILAKQGNSSHQFDLEKENIKNIDLVVVNLYPFQETISDPDVTWDNAIENIDIGGPAMIRAAAKNHESVSILTNPNQYDAFLEKLEAGEISTTIKAKLALEAFEHTASYDIAISQWLSKQIESKYSPYLTSQPIKQTLRYGENPHQNANWYSAVNQGWGQAEQLQGKELSTNNLLDLEAAVATIREFGYDLGNKGNSCEKAAVIIKHTNPCGVAVSNNLSNAFNLALECDSISAFGGIVALNCNLDAATAKELSSLFLECVVAPDYDANALEILSTKKNLRIIKLSHSSIKSSERKYIRSILGGILVQEVDDKLIEPNEWKVPTKLQMSIEDKADLAFAWRVVRHVRSNAIVVASAGQTLGIGAGQMNRIGAAKIALEAAGEKAQGAVLASDGFFPFDDTVHLASRYGIKSIIQPGGSIRDQSSIDACNQLGLSMIFTGKRHFLH.

Positions 1–146 constitute an MGS-like domain; the sequence is MARIALISVS…KNHESVSILT (146 aa).

It belongs to the PurH family.

It catalyses the reaction (6R)-10-formyltetrahydrofolate + 5-amino-1-(5-phospho-beta-D-ribosyl)imidazole-4-carboxamide = 5-formamido-1-(5-phospho-D-ribosyl)imidazole-4-carboxamide + (6S)-5,6,7,8-tetrahydrofolate. The catalysed reaction is IMP + H2O = 5-formamido-1-(5-phospho-D-ribosyl)imidazole-4-carboxamide. Its pathway is purine metabolism; IMP biosynthesis via de novo pathway; 5-formamido-1-(5-phospho-D-ribosyl)imidazole-4-carboxamide from 5-amino-1-(5-phospho-D-ribosyl)imidazole-4-carboxamide (10-formyl THF route): step 1/1. It functions in the pathway purine metabolism; IMP biosynthesis via de novo pathway; IMP from 5-formamido-1-(5-phospho-D-ribosyl)imidazole-4-carboxamide: step 1/1. The sequence is that of Bifunctional purine biosynthesis protein PurH from Prochlorococcus marinus (strain MIT 9211).